The primary structure comprises 395 residues: MAATCEISNVFSNYFNAMYSSEDPTLAPAPLTTFGTEDFVLTLNNQHMSPEGPVGCVGPQTRSQRDRTEPPAVLHLAEKASWTGERPQFWSKTQVLDWISYQVEKNKYDASSIDFSRCDMDGATLCNCALEELRLVFGPLGDQLHAQLRDLTSSSSDELSWIIELLEKDGMTFQEGLGDSGPFDQGSPFAQELLDDGRQASPYYGSSYGPGAPSPGSSDFSTSGTDTPQSSHSSDSGGSDVDLDLTDSKVFPRDGFPDYKKGEPKHGKRKRGRPRKLSKEYWDCLEGKKSKHAPRGTHLWEFIRDILIHPELNEGLMKWENRHEGVFKFLRSEAVAQLWGQKKKNSNMTYEKLSRAMRYYYKREILERVDGRRLVYKFGKNSSGWKEEEVGESQN.

The PNT domain maps to 69–155 (EPPAVLHLAE…AQLRDLTSSS (87 aa)). Positions 200 to 240 (ASPYYGSSYGPGAPSPGSSDFSTSGTDTPQSSHSSDSGGSD) are enriched in low complexity. The interval 200–275 (ASPYYGSSYG…HGKRKRGRPR (76 aa)) is disordered. Residues 246-265 (TDSKVFPRDGFPDYKKGEPK) are compositionally biased toward basic and acidic residues. Positions 266 to 275 (HGKRKRGRPR) are enriched in basic residues. Residues 297 to 379 (THLWEFIRDI…DGRRLVYKFG (83 aa)) constitute a DNA-binding region (ETS).

Belongs to the ETS family. As to quaternary structure, interacts with TBP. Interacts with CREBBP and EP300; these act as transcriptional coactivators of ELF3 and positively modulate its function. Interacts with XRCC5/KU86 and XRCC6/KU70; these inhibit the ability of ELF3 to bind DNA and negatively modulate its transcriptional activity. Associated with CLND7 and POU2F3. Interacts with ZNF768.

The protein resides in the cytoplasm. Its subcellular location is the nucleus. In terms of biological role, transcriptional activator that binds and transactivates ETS sequences containing the consensus nucleotide core sequence GGA[AT]. Acts synergistically with POU2F3 to transactivate the SPRR2A promoter and with RUNX1 to transactivate the ANGPT1 promoter. Also transactivates collagenase, CCL20, CLND7, FLG, KRT8, NOS2, PTGS2, SPRR2B, TGFBR2 and TGM3 promoters. Represses KRT4 promoter activity. Involved in mediating vascular inflammation. May play an important role in epithelial cell differentiation and tumorigenesis. May be a critical downstream effector of the ERBB2 signaling pathway. May be associated with mammary gland development and involution. Plays an important role in the regulation of transcription with TATA-less promoters in preimplantation embryos, which is essential in preimplantation development. The protein is ETS-related transcription factor Elf-3 of Rattus norvegicus (Rat).